Here is an 80-residue protein sequence, read N- to C-terminus: D-alanyl carrier protein 2 (80 aa).

One can recognise a Carrier domain in the interval 1-80; that stretch reads MIMDDVKATV…KIVAKVASLQ (80 aa). O-(pantetheine 4'-phosphoryl)serine is present on Ser-38.

The protein belongs to the DltC family. In terms of processing, 4'-phosphopantetheine is transferred from CoA to a specific serine of apo-DCP.

The protein resides in the cytoplasm. It participates in cell wall biogenesis; lipoteichoic acid biosynthesis. Carrier protein involved in the D-alanylation of lipoteichoic acid (LTA). The loading of thioester-linked D-alanine onto DltC is catalyzed by D-alanine--D-alanyl carrier protein ligase DltA. The DltC-carried D-alanyl group is further transferred to cell membrane phosphatidylglycerol (PG) by forming an ester bond, probably catalyzed by DltD. D-alanylation of LTA plays an important role in modulating the properties of the cell wall in Gram-positive bacteria, influencing the net charge of the cell wall. The sequence is that of D-alanyl carrier protein 2 from Lactiplantibacillus plantarum (strain ATCC BAA-793 / NCIMB 8826 / WCFS1) (Lactobacillus plantarum).